The chain runs to 369 residues: MRDNTQHYRELFLDDIPLMDVRAPVEYHKGAFPNTVNRPLMNDIERQKVGTSYKQHGQQAAIALGHELVCGALKAERLAAWKAFAEANPNGYLYCFRGGLRSQIVQQWLKQDAGIDYPRVIGGYKALRNFLFETTRAAVDECDFVLVGGLTGCGKTEVIAALDNSLDLEGHANHRGSSFGRRATPQPAQIDFENRLAIDILKKRHRGVGQFVLEDEGRIVGSCSLPLELYQGMQGYPLVWLEDAFEQRVERILRDYVIDLRSEFERVVGVEEGFAAFSAYLQKSLAGIVKRLGGERYQRLAAILVQALEEQGRDGSVDTHRGWIEGLLKEYYDPMYAFQRQSKEDRVEFRGNQAEVIGYLRQRQALRPS.

Residues 12-136 enclose the Rhodanese domain; sequence FLDDIPLMDV…LRNFLFETTR (125 aa). Cys95 functions as the S-selanylcysteine intermediate in the catalytic mechanism.

Belongs to the SelU family. As to quaternary structure, monomer.

The enzyme catalyses 5-methylaminomethyl-2-thiouridine(34) in tRNA + selenophosphate + (2E)-geranyl diphosphate + H2O + H(+) = 5-methylaminomethyl-2-selenouridine(34) in tRNA + (2E)-thiogeraniol + phosphate + diphosphate. The catalysed reaction is 5-methylaminomethyl-2-thiouridine(34) in tRNA + (2E)-geranyl diphosphate = 5-methylaminomethyl-S-(2E)-geranyl-thiouridine(34) in tRNA + diphosphate. It catalyses the reaction 5-methylaminomethyl-S-(2E)-geranyl-thiouridine(34) in tRNA + selenophosphate + H(+) = 5-methylaminomethyl-2-(Se-phospho)selenouridine(34) in tRNA + (2E)-thiogeraniol. It carries out the reaction 5-methylaminomethyl-2-(Se-phospho)selenouridine(34) in tRNA + H2O = 5-methylaminomethyl-2-selenouridine(34) in tRNA + phosphate. Involved in the post-transcriptional modification of the uridine at the wobble position (U34) of tRNA(Lys), tRNA(Glu) and tRNA(Gln). Catalyzes the conversion of 2-thiouridine (S2U-RNA) to 2-selenouridine (Se2U-RNA). Acts in a two-step process involving geranylation of 2-thiouridine (S2U) to S-geranyl-2-thiouridine (geS2U) and subsequent selenation of the latter derivative to 2-selenouridine (Se2U) in the tRNA chain. The polypeptide is tRNA 2-selenouridine synthase (Pseudomonas aeruginosa (strain ATCC 15692 / DSM 22644 / CIP 104116 / JCM 14847 / LMG 12228 / 1C / PRS 101 / PAO1)).